The chain runs to 81 residues: Exodeoxyribonuclease 7 small subunit (81 aa).

Residues 59 to 81 (KLVDKDGNEKTLDPQNASAPEEE) are disordered. Positions 60 to 70 (LVDKDGNEKTL) are enriched in basic and acidic residues. Positions 71–81 (DPQNASAPEEE) are enriched in polar residues.

Belongs to the XseB family. Heterooligomer composed of large and small subunits.

It localises to the cytoplasm. The enzyme catalyses Exonucleolytic cleavage in either 5'- to 3'- or 3'- to 5'-direction to yield nucleoside 5'-phosphates.. Functionally, bidirectionally degrades single-stranded DNA into large acid-insoluble oligonucleotides, which are then degraded further into small acid-soluble oligonucleotides. The sequence is that of Exodeoxyribonuclease 7 small subunit from Lactobacillus gasseri (strain ATCC 33323 / DSM 20243 / BCRC 14619 / CIP 102991 / JCM 1131 / KCTC 3163 / NCIMB 11718 / NCTC 13722 / AM63).